Consider the following 163-residue polypeptide: MTRITARPLTREAFAPFGDVIDMGGDNHYPINGGKAERYHDLATAEATGPNARVLISMVRGTPYELPLKLTMVERHPFGSQAFIPLSPRPFLVVVCHDGKEGPGEPYAFITAPGQGINYSRNLWHGVLTPLGEPQDFLIVDRGGDGSNLEEFHFSHAYEIHLP.

This sequence belongs to the ureidoglycolate lyase family. In terms of assembly, homodimer. The cofactor is Ni(2+).

It catalyses the reaction (S)-ureidoglycolate = urea + glyoxylate. Its pathway is nitrogen metabolism; (S)-allantoin degradation. In terms of biological role, catalyzes the catabolism of the allantoin degradation intermediate (S)-ureidoglycolate, generating urea and glyoxylate. Involved in the utilization of allantoin as nitrogen source. This chain is Ureidoglycolate lyase, found in Mesorhizobium japonicum (strain LMG 29417 / CECT 9101 / MAFF 303099) (Mesorhizobium loti (strain MAFF 303099)).